The chain runs to 246 residues: Ribonuclease 3 (246 aa).

The 134-residue stretch at Leu10–Gly143 folds into the RNase III domain. Glu56 serves as a coordination point for Mg(2+). The active site involves Asp60. 2 residues coordinate Mg(2+): Asn129 and Glu132. Glu132 is an active-site residue. The region spanning Asp170 to Glu239 is the DRBM domain.

Belongs to the ribonuclease III family. In terms of assembly, homodimer. Mg(2+) is required as a cofactor.

Its subcellular location is the cytoplasm. It catalyses the reaction Endonucleolytic cleavage to 5'-phosphomonoester.. Digests double-stranded RNA. Involved in the processing of primary rRNA transcript to yield the immediate precursors to the large and small rRNAs (23S and 16S). Processes some mRNAs, and tRNAs when they are encoded in the rRNA operon. Processes pre-crRNA and tracrRNA of type II CRISPR loci if present in the organism. The polypeptide is Ribonuclease 3 (Magnetococcus marinus (strain ATCC BAA-1437 / JCM 17883 / MC-1)).